The chain runs to 374 residues: Cathepsin W (374 aa).

The first 21 residues, 1–21 (MAITVYLSCLLVLSMAGLAQG), serve as a signal peptide directing secretion. Residues 22–127 (IKSSLRSQDP…EVGSEEWGES (106 aa)) constitute a propeptide that is removed on maturation. Disulfide bonds link cysteine 150–cysteine 191 and cysteine 184–cysteine 226. Cysteine 153 is an active-site residue. A glycan (N-linked (GlcNAc...) asparagine) is linked at asparagine 205. Active-site residues include histidine 291 and asparagine 329. Asparagine 347 carries N-linked (GlcNAc...) asparagine glycosylation.

This sequence belongs to the peptidase C1 family.

It is found in the endoplasmic reticulum. Functionally, may have a specific function in the mechanism or regulation of T-cell cytolytic activity. The polypeptide is Cathepsin W (CTSW) (Felis catus (Cat)).